Reading from the N-terminus, the 595-residue chain is NADH-quinone oxidoreductase subunit C/D (595 aa).

Positions 1-185 (MTDLTAQAAC…DPFELTKAKQ (185 aa)) are NADH dehydrogenase I subunit C. An NADH dehydrogenase I subunit D region spans residues 209–595 (DFMFLNLGPN…IDFVMSDVDR (387 aa)).

In the N-terminal section; belongs to the complex I 30 kDa subunit family. It in the C-terminal section; belongs to the complex I 49 kDa subunit family. As to quaternary structure, NDH-1 is composed of 13 different subunits. Subunits NuoB, CD, E, F, and G constitute the peripheral sector of the complex.

The protein localises to the cell inner membrane. The catalysed reaction is a quinone + NADH + 5 H(+)(in) = a quinol + NAD(+) + 4 H(+)(out). NDH-1 shuttles electrons from NADH, via FMN and iron-sulfur (Fe-S) centers, to quinones in the respiratory chain. The immediate electron acceptor for the enzyme in this species is believed to be ubiquinone. Couples the redox reaction to proton translocation (for every two electrons transferred, four hydrogen ions are translocated across the cytoplasmic membrane), and thus conserves the redox energy in a proton gradient. This is NADH-quinone oxidoreductase subunit C/D from Enterobacter sp. (strain 638).